We begin with the raw amino-acid sequence, 147 residues long: Methylglyoxal synthase (147 aa).

Residues 4–147 (VSVPATKRIA…LLNFELLCES (144 aa)) form the MGS-like domain. Substrate is bound by residues His-17, Lys-21, 43 to 46 (TGTT), and 63 to 64 (SG). The active-site Proton donor/acceptor is the Asp-69. Position 96 (His-96) interacts with substrate.

Belongs to the methylglyoxal synthase family.

It carries out the reaction dihydroxyacetone phosphate = methylglyoxal + phosphate. Functionally, catalyzes the formation of methylglyoxal from dihydroxyacetone phosphate. The protein is Methylglyoxal synthase of Leptospira borgpetersenii serovar Hardjo-bovis (strain JB197).